Reading from the N-terminus, the 199-residue chain is Holliday junction branch migration complex subunit RuvA (199 aa).

The domain I stretch occupies residues 1–64 (MIAKLTGRLD…EDFLRLLGFA (64 aa)). The segment at 65-143 (RAEERDWFRL…ALGGISGSGP (79 aa)) is domain II. The flexible linker stretch occupies residues 144–146 (ALS). The interval 147–199 (AAAGPVGDAIAALTGLGFKPGEASAAVAAANEELGADASLDALVRVALKKAAK) is domain III.

This sequence belongs to the RuvA family. In terms of assembly, homotetramer. Forms an RuvA(8)-RuvB(12)-Holliday junction (HJ) complex. HJ DNA is sandwiched between 2 RuvA tetramers; dsDNA enters through RuvA and exits via RuvB. An RuvB hexamer assembles on each DNA strand where it exits the tetramer. Each RuvB hexamer is contacted by two RuvA subunits (via domain III) on 2 adjacent RuvB subunits; this complex drives branch migration. In the full resolvosome a probable DNA-RuvA(4)-RuvB(12)-RuvC(2) complex forms which resolves the HJ.

The protein localises to the cytoplasm. Its function is as follows. The RuvA-RuvB-RuvC complex processes Holliday junction (HJ) DNA during genetic recombination and DNA repair, while the RuvA-RuvB complex plays an important role in the rescue of blocked DNA replication forks via replication fork reversal (RFR). RuvA specifically binds to HJ cruciform DNA, conferring on it an open structure. The RuvB hexamer acts as an ATP-dependent pump, pulling dsDNA into and through the RuvAB complex. HJ branch migration allows RuvC to scan DNA until it finds its consensus sequence, where it cleaves and resolves the cruciform DNA. This Sphingopyxis alaskensis (strain DSM 13593 / LMG 18877 / RB2256) (Sphingomonas alaskensis) protein is Holliday junction branch migration complex subunit RuvA.